Reading from the N-terminus, the 248-residue chain is Cutinase cut1 (248 aa).

The signal sequence occupies residues 1–17; it reads MRSLSLFTALLAGQAFA. Cys-79 and Cys-153 are joined by a disulfide. Ser-164 acts as the Nucleophile in catalysis. Cysteines 212 and 219 form a disulfide. Residue Asp-216 is part of the active site. His-229 serves as the catalytic Proton donor/acceptor.

Belongs to the cutinase family. In terms of processing, the 2 disulfide bonds play a critical role in holding the catalytic residues in juxta-position; reduction of the disulfide bridges results in the complete inactivation of the enzyme.

Its subcellular location is the secreted. It catalyses the reaction cutin + H2O = cutin monomers.. Catalyzes the hydrolysis of complex carboxylic polyesters found in the cell wall of plants. May degrade cutin, a macromolecule that forms the structure of the plant cuticle. May also degrade suberin, a specialized macromolecule found in the cell wall of various plant tissues. The polypeptide is Cutinase cut1 (Trichoderma harzianum (Hypocrea lixii)).